Here is a 115-residue protein sequence, read N- to C-terminus: Inner membrane protein YidH (115 aa).

The Cytoplasmic segment spans residues 1-30 (MKISRLGEAPDYRFSLANERTFLAWIRTAL). Residues 31–51 (GFLAAGVGLDQLAPDFATPVI) form a helical membrane-spanning segment. Topologically, residues 52 to 53 (RE) are periplasmic. A helical transmembrane segment spans residues 54–74 (LLALLLCLFSGGLAMYGYLRW). Topologically, residues 75–92 (LRNEKAMRLKEDLPYTNS) are cytoplasmic. A helical membrane pass occupies residues 93 to 113 (LLIISLILMVVAVIVMGLVLY). The Periplasmic segment spans residues 114–115 (AG).

The protein to M.tuberculosis Rv2272.

It localises to the cell inner membrane. This Escherichia coli O157:H7 protein is Inner membrane protein YidH (yidH).